A 337-amino-acid polypeptide reads, in one-letter code: Ribosomal RNA small subunit methyltransferase H (337 aa).

Residues 36–38, Asp-56, Phe-82, Asp-100, and Gln-107 contribute to the S-adenosyl-L-methionine site; that span reads GGH. The segment at 314–337 is disordered; sequence GLERRSGRIPNPRSPIPASQGDAR.

The protein belongs to the methyltransferase superfamily. RsmH family.

The protein resides in the cytoplasm. The catalysed reaction is cytidine(1402) in 16S rRNA + S-adenosyl-L-methionine = N(4)-methylcytidine(1402) in 16S rRNA + S-adenosyl-L-homocysteine + H(+). Its function is as follows. Specifically methylates the N4 position of cytidine in position 1402 (C1402) of 16S rRNA. The chain is Ribosomal RNA small subunit methyltransferase H from Xanthomonas oryzae pv. oryzae (strain PXO99A).